Here is a 369-residue protein sequence, read N- to C-terminus: Probable trehalose-phosphate phosphatase I (369 aa).

It belongs to the trehalose phosphatase family. A divalent metal cation is required as a cofactor.

The enzyme catalyses alpha,alpha-trehalose 6-phosphate + H2O = alpha,alpha-trehalose + phosphate. It functions in the pathway glycan biosynthesis; trehalose biosynthesis. In terms of biological role, removes the phosphate from trehalose 6-phosphate to produce free trehalose. Trehalose accumulation in plant may improve abiotic stress tolerance. The sequence is that of Probable trehalose-phosphate phosphatase I (TPPI) from Arabidopsis thaliana (Mouse-ear cress).